The following is a 322-amino-acid chain: Cytochrome f (322 aa).

The first 37 residues, 1 to 37, serve as a signal peptide directing secretion; sequence MQNRKTYAYDWIKKWMIKSISTLIIINTMVWSSVSEA. Heme is bound by residues tyrosine 38, cysteine 58, cysteine 61, and histidine 62. A helical transmembrane segment spans residues 285–307; the sequence is VLRVQGLLLFFASVILAQIFLVL.

Belongs to the cytochrome f family. In terms of assembly, the 4 large subunits of the cytochrome b6-f complex are cytochrome b6, subunit IV (17 kDa polypeptide, petD), cytochrome f and the Rieske protein, while the 4 small subunits are PetG, PetL, PetM and PetN. The complex functions as a dimer. Heme is required as a cofactor.

It is found in the plastid. Its subcellular location is the chloroplast thylakoid membrane. Its function is as follows. Component of the cytochrome b6-f complex, which mediates electron transfer between photosystem II (PSII) and photosystem I (PSI), cyclic electron flow around PSI, and state transitions. In Anthoceros angustus (Hornwort), this protein is Cytochrome f (petA).